Here is a 142-residue protein sequence, read N- to C-terminus: uncharacterized protein (142 aa).

This is an uncharacterized protein from Pseudomonas putida (Arthrobacter siderocapsulatus).